Here is a 242-residue protein sequence, read N- to C-terminus: Small ribosomal subunit protein uS2 (242 aa).

Belongs to the universal ribosomal protein uS2 family.

The polypeptide is Small ribosomal subunit protein uS2 (Shewanella pealeana (strain ATCC 700345 / ANG-SQ1)).